Reading from the N-terminus, the 268-residue chain is Phosphatidylglycerol--prolipoprotein diacylglyceryl transferase (268 aa).

Helical transmembrane passes span 27 to 47, 66 to 86, 104 to 124, 130 to 150, 181 to 201, 208 to 228, and 242 to 262; these read PALRWYGFTYLVGFVAAMWLL, LLFYGFLGVILGGRIGYVLFY, GGMSFHGGLIGVITAMIYITW, FFAVADMVAPVVPIGLGAGRI, PSQLYQFALEGVALFLLLYWF, VGAVSGMFLLGYGIFRVIVET, and LMTMGQILSVPMILFGLYLIL. Arg-149 is a binding site for a 1,2-diacyl-sn-glycero-3-phospho-(1'-sn-glycerol).

This sequence belongs to the Lgt family.

The protein resides in the cell inner membrane. The catalysed reaction is L-cysteinyl-[prolipoprotein] + a 1,2-diacyl-sn-glycero-3-phospho-(1'-sn-glycerol) = an S-1,2-diacyl-sn-glyceryl-L-cysteinyl-[prolipoprotein] + sn-glycerol 1-phosphate + H(+). The protein operates within protein modification; lipoprotein biosynthesis (diacylglyceryl transfer). Catalyzes the transfer of the diacylglyceryl group from phosphatidylglycerol to the sulfhydryl group of the N-terminal cysteine of a prolipoprotein, the first step in the formation of mature lipoproteins. The chain is Phosphatidylglycerol--prolipoprotein diacylglyceryl transferase from Shewanella oneidensis (strain ATCC 700550 / JCM 31522 / CIP 106686 / LMG 19005 / NCIMB 14063 / MR-1).